The primary structure comprises 147 residues: Hemoglobin subunit beta (147 aa).

Valine 2 carries the post-translational modification N-acetylvaline. One can recognise a Globin domain in the interval histidine 3 to histidine 147. Position 13 is a phosphothreonine (threonine 13). The residue at position 45 (serine 45) is a Phosphoserine. Residue lysine 60 is modified to N6-acetyllysine. Histidine 64 is a binding site for heme b. Lysine 83 bears the N6-acetyllysine mark. Heme b is bound at residue histidine 93. Cysteine 94 is subject to S-nitrosocysteine. An N6-acetyllysine modification is found at lysine 145.

The protein belongs to the globin family. In terms of assembly, heterotetramer of two alpha chains and two beta chains. In terms of tissue distribution, red blood cells.

Functionally, involved in oxygen transport from the lung to the various peripheral tissues. This is Hemoglobin subunit beta (HBB) from Colobus polykomos (Western black-and-white colobus monkey).